The following is a 322-amino-acid chain: uncharacterized protein (322 aa).

5 helical membrane passes run Gly-159–Leu-179, Met-203–Leu-223, Gly-234–Leu-254, Phe-267–Tyr-287, and Thr-296–Trp-316.

The protein resides in the membrane. This is an uncharacterized protein from Dictyostelium discoideum (Social amoeba).